The primary structure comprises 286 residues: F-box/SPRY domain-containing protein 1 (286 aa).

The residue at position 2 (Ala-2) is an N-acetylalanine. One can recognise an F-box domain in the interval 33 to 82 (SGVGGRLPSRVLELVFSYLELSELRSCALVCKHWYRCLHGDENSEVWRSL). The 193-residue stretch at 92-284 (LRTDILCNLP…VTLVYLGKPL (193 aa)) folds into the B30.2/SPRY domain.

This sequence belongs to the FBXO45/Fsn family. As to quaternary structure, forms a complex with MYCBP2 and SKP1. Interacts with HEY1; leading to FBXO45 nuclear translocation. Interacts (via SPRY domain) with CDH2. In terms of tissue distribution, expressed speciffically in the central nervous system, including cerebellum, medulla oblongata, olfactory bulb, hippocampus, cortex and brain stem.

The protein resides in the secreted. It is found in the postsynaptic cell membrane. It localises to the presynaptic cell membrane. The protein localises to the nucleus. It participates in protein modification; protein ubiquitination. Functionally, component of E3 ubiquitin ligase complex consisting of FBXO45, MYCBP2 and SKP1. Functions in substrate recognition but plays also an important role in assembly of the complex. Required for normal neuromuscular synaptogenesis, axon pathfinding and neuronal migration. Regulates neuron migration during brain development through interaction with N-cadherin/CDH2 after secretion via a non-classical mechanism. Plays a role in the regulation of neurotransmission at mature neurons. May control synaptic activity by controlling UNC13A via ubiquitin dependent pathway. Specifically recognizes TP73, promoting its ubiquitination and degradation. Polyubiquitinates NMNAT2, an adenylyltransferase that acts as an axon maintenance factor, and regulates its stability and degradation by the proteasome. Acts also by ubiquitinating FBXW7 during prolonged mitotic arrest and promotes FBXW7 proteasomal degradation. Induces subsequently an increase in mitotic slippage and prevents mitotic cell death. In response to influenza infection, mediates interferon-lambda receptor IFNLR1 polyubiquitination and degradation through the ubiquitin-proteasome system by docking with its intracellular receptor domain. This is F-box/SPRY domain-containing protein 1 from Mus musculus (Mouse).